A 688-amino-acid chain; its full sequence is Translation initiation factor IF-2 (688 aa).

Composition is skewed to basic and acidic residues over residues Gly53 to Glu62 and Lys86 to Asn95. The interval Gly53–Glu100 is disordered. Positions Lys187–Glu354 constitute a tr-type G domain. Positions Gly196 to Thr203 are G1. Gly196 to Thr203 provides a ligand contact to GTP. Residues Gly221–His225 form a G2 region. The interval Asp242–Gly245 is G3. Residues Asp242–His246 and Asn296–Asp299 contribute to the GTP site. The segment at Asn296–Asp299 is G4. The tract at residues Ser332–His334 is G5.

It belongs to the TRAFAC class translation factor GTPase superfamily. Classic translation factor GTPase family. IF-2 subfamily.

Its subcellular location is the cytoplasm. Functionally, one of the essential components for the initiation of protein synthesis. Protects formylmethionyl-tRNA from spontaneous hydrolysis and promotes its binding to the 30S ribosomal subunits. Also involved in the hydrolysis of GTP during the formation of the 70S ribosomal complex. This is Translation initiation factor IF-2 from Clostridium botulinum (strain ATCC 19397 / Type A).